Consider the following 86-residue polypeptide: Large ribosomal subunit protein eL43 (86 aa).

Residues Cys38, Cys41, Cys56, and Cys59 each coordinate Zn(2+). The C4-type zinc-finger motif lies at 38–59; sequence CPVCGRKAVRRISTGIWQCQKC.

This sequence belongs to the eukaryotic ribosomal protein eL43 family. Part of the 50S ribosomal subunit. Zn(2+) is required as a cofactor.

The protein is Large ribosomal subunit protein eL43 of Thermococcus kodakarensis (strain ATCC BAA-918 / JCM 12380 / KOD1) (Pyrococcus kodakaraensis (strain KOD1)).